Here is a 305-residue protein sequence, read N- to C-terminus: HPr kinase/phosphorylase (305 aa).

Active-site residues include His-138 and Lys-159. Residue 153 to 160 (GESGIGKS) coordinates ATP. A Mg(2+)-binding site is contributed by Ser-160. The Proton acceptor; for phosphorylation activity. Proton donor; for dephosphorylation activity role is filled by Asp-177. The important for the catalytic mechanism of both phosphorylation and dephosphorylation stretch occupies residues 201–210 (IEIRGIGILD). Glu-202 lines the Mg(2+) pocket. Arg-243 is an active-site residue. Residues 264–269 (PVRPGR) are important for the catalytic mechanism of dephosphorylation.

The protein belongs to the HPrK/P family. Homohexamer. The cofactor is Mg(2+).

The catalysed reaction is [HPr protein]-L-serine + ATP = [HPr protein]-O-phospho-L-serine + ADP + H(+). The enzyme catalyses [HPr protein]-O-phospho-L-serine + phosphate + H(+) = [HPr protein]-L-serine + diphosphate. Catalyzes the ATP- as well as the pyrophosphate-dependent phosphorylation of a specific serine residue in HPr, a phosphocarrier protein of the phosphoenolpyruvate-dependent sugar phosphotransferase system (PTS). HprK/P also catalyzes the pyrophosphate-producing, inorganic phosphate-dependent dephosphorylation (phosphorolysis) of seryl-phosphorylated HPr (P-Ser-HPr). The two antagonistic activities of HprK/P are regulated by several intracellular metabolites, which change their concentration in response to the absence or presence of rapidly metabolisable carbon sources (glucose, fructose, etc.) in the growth medium. Therefore, by controlling the phosphorylation state of HPr, HPrK/P is a sensor enzyme that plays a major role in the regulation of carbon metabolism and sugar transport: it mediates carbon catabolite repression (CCR), and regulates PTS-catalyzed carbohydrate uptake and inducer exclusion. The protein is HPr kinase/phosphorylase of Thermoanaerobacter pseudethanolicus (strain ATCC 33223 / 39E) (Clostridium thermohydrosulfuricum).